A 172-amino-acid polypeptide reads, in one-letter code: 3-hydroxydecanoyl-[acyl-carrier-protein] dehydratase (172 aa).

Residue histidine 71 is part of the active site.

Belongs to the thioester dehydratase family. FabA subfamily. Homodimer.

Its subcellular location is the cytoplasm. It catalyses the reaction a (3R)-hydroxyacyl-[ACP] = a (2E)-enoyl-[ACP] + H2O. The catalysed reaction is (3R)-hydroxydecanoyl-[ACP] = (2E)-decenoyl-[ACP] + H2O. The enzyme catalyses (2E)-decenoyl-[ACP] = (3Z)-decenoyl-[ACP]. Its pathway is lipid metabolism; fatty acid biosynthesis. Functionally, necessary for the introduction of cis unsaturation into fatty acids. Catalyzes the dehydration of (3R)-3-hydroxydecanoyl-ACP to E-(2)-decenoyl-ACP and then its isomerization to Z-(3)-decenoyl-ACP. Can catalyze the dehydratase reaction for beta-hydroxyacyl-ACPs with saturated chain lengths up to 16:0, being most active on intermediate chain length. The protein is 3-hydroxydecanoyl-[acyl-carrier-protein] dehydratase of Klebsiella pneumoniae (strain 342).